We begin with the raw amino-acid sequence, 88 residues long: uncharacterized protein (88 aa).

This is an uncharacterized protein from Archaeoglobus fulgidus (strain ATCC 49558 / DSM 4304 / JCM 9628 / NBRC 100126 / VC-16).